The chain runs to 74 residues: Protein SlyX homolog (74 aa).

The disordered stretch occupies residues 54–74 (QDRNPDAQEPYSLRDEIPPHY).

The protein belongs to the SlyX family.

This Neisseria gonorrhoeae (strain ATCC 700825 / FA 1090) protein is Protein SlyX homolog.